Reading from the N-terminus, the 273-residue chain is 4-hydroxy-tetrahydrodipicolinate reductase (273 aa).

NAD(+) is bound by residues 12-17 (GAGGRM) and Glu-38. NADP(+) is bound at residue Arg-39. NAD(+)-binding positions include 102 to 104 (GTT) and 126 to 129 (AANF). The Proton donor/acceptor role is filled by His-159. Residue His-160 participates in (S)-2,3,4,5-tetrahydrodipicolinate binding. Residue Lys-163 is the Proton donor of the active site. Residue 169-170 (GT) coordinates (S)-2,3,4,5-tetrahydrodipicolinate.

This sequence belongs to the DapB family. In terms of assembly, homotetramer.

It is found in the cytoplasm. It carries out the reaction (S)-2,3,4,5-tetrahydrodipicolinate + NAD(+) + H2O = (2S,4S)-4-hydroxy-2,3,4,5-tetrahydrodipicolinate + NADH + H(+). The enzyme catalyses (S)-2,3,4,5-tetrahydrodipicolinate + NADP(+) + H2O = (2S,4S)-4-hydroxy-2,3,4,5-tetrahydrodipicolinate + NADPH + H(+). It participates in amino-acid biosynthesis; L-lysine biosynthesis via DAP pathway; (S)-tetrahydrodipicolinate from L-aspartate: step 4/4. In terms of biological role, catalyzes the conversion of 4-hydroxy-tetrahydrodipicolinate (HTPA) to tetrahydrodipicolinate. The polypeptide is 4-hydroxy-tetrahydrodipicolinate reductase (Shigella sonnei (strain Ss046)).